We begin with the raw amino-acid sequence, 200 residues long: Small ribosomal subunit protein uS4 (200 aa).

The interval 22–42 (TGKELEKRPYAPGPHGPNQRK) is disordered. The region spanning 92-152 (ARLDNLVYRM…EKSNSLVVVK (61 aa)) is the S4 RNA-binding domain.

Belongs to the universal ribosomal protein uS4 family. As to quaternary structure, part of the 30S ribosomal subunit. Contacts protein S5. The interaction surface between S4 and S5 is involved in control of translational fidelity.

Functionally, one of the primary rRNA binding proteins, it binds directly to 16S rRNA where it nucleates assembly of the body of the 30S subunit. Its function is as follows. With S5 and S12 plays an important role in translational accuracy. This Bacillus mycoides (strain KBAB4) (Bacillus weihenstephanensis) protein is Small ribosomal subunit protein uS4.